The primary structure comprises 391 residues: Probable tRNA sulfurtransferase (391 aa).

The THUMP domain occupies 60 to 167; that stretch reads DETVAALQRV…NKAYVYSNTL (108 aa). ATP is bound by residues 184-185, 209-210, arginine 266, glycine 288, and glutamine 297; these read LL and YF.

This sequence belongs to the ThiI family.

It is found in the cytoplasm. It catalyses the reaction [ThiI sulfur-carrier protein]-S-sulfanyl-L-cysteine + a uridine in tRNA + 2 reduced [2Fe-2S]-[ferredoxin] + ATP + H(+) = [ThiI sulfur-carrier protein]-L-cysteine + a 4-thiouridine in tRNA + 2 oxidized [2Fe-2S]-[ferredoxin] + AMP + diphosphate. The catalysed reaction is [ThiS sulfur-carrier protein]-C-terminal Gly-Gly-AMP + S-sulfanyl-L-cysteinyl-[cysteine desulfurase] + AH2 = [ThiS sulfur-carrier protein]-C-terminal-Gly-aminoethanethioate + L-cysteinyl-[cysteine desulfurase] + A + AMP + 2 H(+). It participates in cofactor biosynthesis; thiamine diphosphate biosynthesis. In terms of biological role, catalyzes the ATP-dependent transfer of a sulfur to tRNA to produce 4-thiouridine in position 8 of tRNAs, which functions as a near-UV photosensor. Also catalyzes the transfer of sulfur to the sulfur carrier protein ThiS, forming ThiS-thiocarboxylate. This is a step in the synthesis of thiazole, in the thiamine biosynthesis pathway. The sulfur is donated as persulfide by IscS. This is Probable tRNA sulfurtransferase from Lachnoclostridium phytofermentans (strain ATCC 700394 / DSM 18823 / ISDg) (Clostridium phytofermentans).